The chain runs to 561 residues: Ankyrin repeat protein OPG189 (561 aa).

ANK repeat units follow at residues 68–98 (YGEN…NINK), 172–208 (YGCT…DVDK), 212–242 (YGNT…NIDS), 246–275 (NGYT…NVNA), 279–307 (FGTT…ELEI), 342–371 (YNET…DFET), and 375–404 (SGCT…SLKI).

It belongs to the orthopoxvirus OPG189 protein family.

Its function is as follows. Contributes to viral release without involving rearrangement of host actin. The sequence is that of Ankyrin repeat protein OPG189 (OPG189) from Cynomys gunnisoni (Gunnison's prairie dog).